A 2157-amino-acid chain; its full sequence is DExH-box ATP-dependent RNA helicase DExH14 (2157 aa).

Residues 374-394 (KAASNTQSRMPTYGTQVTVQT) are disordered. Over residues 375-394 (AASNTQSRMPTYGTQVTVQT) the composition is skewed to polar residues. The region spanning 517-699 (QTVYHTNENI…FLRVNTDTGL (183 aa)) is the Helicase ATP-binding 1 domain. 530–537 (APTGAGKT) is a binding site for ATP. A DEVH box motif is present at residues 641–644 (DEVH). A Helicase C-terminal 1 domain is found at 734-932 (CYKKVVDSIK…SLKDNLNAEV (199 aa)). In terms of domain architecture, SEC63 1 spans 1008-1315 (CTELGRVASH…LHAETYFTIS (308 aa)). The 176-residue stretch at 1365–1540 (HVLYHTDNNV…WLGVGEIGLF (176 aa)) folds into the Helicase ATP-binding 2 domain. An ATP-binding site is contributed by 1378–1385 (APTGSGKT). The DEIH box motif lies at 1482–1485 (DEIH). Residues 1571–1780 (NKPAYAAICT…GTIGNKEDAV (210 aa)) form the Helicase C-terminal 2 domain. In terms of domain architecture, SEC63 2 spans 1839 to 2150 (PTMLGTIASQ…YLGFEQEHSI (312 aa)).

This sequence belongs to the DExH box helicase family.

The protein localises to the nucleus. The enzyme catalyses ATP + H2O = ADP + phosphate + H(+). Functionally, RNA helicase that plays an essential role in pre-mRNA splicing as component of the U5 snRNP and U4/U6-U5 tri-snRNP complexes. Involved in spliceosome assembly, activation and disassembly. This chain is DExH-box ATP-dependent RNA helicase DExH14, found in Arabidopsis thaliana (Mouse-ear cress).